The following is a 428-amino-acid chain: Ectoine/5-hydroxyectoine TRAP transporter large permease protein UehC (428 aa).

12 helical membrane passes run 9–29 (MIVL…GAFI), 49–69 (LAGI…AADI), 99–119 (AAAC…VVAI), 139–159 (ALIV…GMII), 172–192 (FIAG…YAYI), 217–237 (ALWP…GVFS), 242–262 (AAAC…SMSL), 273–293 (GLIT…SWVI), 302–322 (ILGA…VISI), 324–344 (FFIG…VPVF), 366–386 (VAIG…IAVF), and 400–420 (FILM…IALF).

Belongs to the TRAP transporter large permease family. In terms of assembly, the complex comprises the extracytoplasmic solute receptor protein UehA, and the two transmembrane proteins UehB and UehC.

It is found in the cell inner membrane. Part of the tripartite ATP-independent periplasmic (TRAP) transport system UehABC, which imports both ectoine and 5-hydroxyectoine as nutrients, and not as osmoprotectants. The sequence is that of Ectoine/5-hydroxyectoine TRAP transporter large permease protein UehC from Ruegeria pomeroyi (strain ATCC 700808 / DSM 15171 / DSS-3) (Silicibacter pomeroyi).